Consider the following 90-residue polypeptide: Probable Fe(2+)-trafficking protein (90 aa).

Belongs to the Fe(2+)-trafficking protein family.

Its function is as follows. Could be a mediator in iron transactions between iron acquisition and iron-requiring processes, such as synthesis and/or repair of Fe-S clusters in biosynthetic enzymes. In Nitrosomonas europaea (strain ATCC 19718 / CIP 103999 / KCTC 2705 / NBRC 14298), this protein is Probable Fe(2+)-trafficking protein.